Reading from the N-terminus, the 957-residue chain is Glycine dehydrogenase (decarboxylating) (957 aa).

K708 is subject to N6-(pyridoxal phosphate)lysine.

Belongs to the GcvP family. As to quaternary structure, the glycine cleavage system is composed of four proteins: P, T, L and H. Pyridoxal 5'-phosphate serves as cofactor.

It catalyses the reaction N(6)-[(R)-lipoyl]-L-lysyl-[glycine-cleavage complex H protein] + glycine + H(+) = N(6)-[(R)-S(8)-aminomethyldihydrolipoyl]-L-lysyl-[glycine-cleavage complex H protein] + CO2. Its function is as follows. The glycine cleavage system catalyzes the degradation of glycine. The P protein binds the alpha-amino group of glycine through its pyridoxal phosphate cofactor; CO(2) is released and the remaining methylamine moiety is then transferred to the lipoamide cofactor of the H protein. In Escherichia coli (strain SE11), this protein is Glycine dehydrogenase (decarboxylating).